Consider the following 208-residue polypeptide: Uracil phosphoribosyltransferase (208 aa).

5-phospho-alpha-D-ribose 1-diphosphate-binding positions include arginine 78, arginine 103, and 130–138 (DPMLATGGS). Uracil is bound by residues isoleucine 193 and 198 to 200 (GDA). Aspartate 199 contributes to the 5-phospho-alpha-D-ribose 1-diphosphate binding site.

The protein belongs to the UPRTase family. The cofactor is Mg(2+).

It catalyses the reaction UMP + diphosphate = 5-phospho-alpha-D-ribose 1-diphosphate + uracil. It participates in pyrimidine metabolism; UMP biosynthesis via salvage pathway; UMP from uracil: step 1/1. With respect to regulation, allosterically activated by GTP. Catalyzes the conversion of uracil and 5-phospho-alpha-D-ribose 1-diphosphate (PRPP) to UMP and diphosphate. This Klebsiella pneumoniae (strain 342) protein is Uracil phosphoribosyltransferase.